The primary structure comprises 585 residues: Lipoprotein LpqB (585 aa).

The N-terminal stretch at 1–17 is a signal peptide; the sequence is MGRKLLGLLMLAVLLAG. Cys-18 is lipidated: N-palmitoyl cysteine. Residue Cys-18 is the site of S-diacylglycerol cysteine attachment. 2 disordered regions span residues 24 to 48 and 560 to 585; these read SSAPQAIGTVERPAPSNLPKPTPGM and PSADGQQGWSEVPGLTVPGAAPVLPG.

This sequence belongs to the LpqB lipoprotein family.

The protein localises to the cell membrane. This chain is Lipoprotein LpqB, found in Mycolicibacterium paratuberculosis (strain ATCC BAA-968 / K-10) (Mycobacterium paratuberculosis).